Consider the following 438-residue polypeptide: Serine carboxypeptidase-like 5 (438 aa).

The signal sequence occupies residues 1-28 (MANYISSVLKSLLLLLHLVFLIQQHVDS). Disulfide bonds link Cys87-Cys328, Cys251-Cys263, and Cys287-Cys294. N-linked (GlcNAc...) asparagine glycosylation occurs at Asn108. Ser183 is a catalytic residue. Asn347 is a glycosylation site (N-linked (GlcNAc...) asparagine). The active site involves Asp363. N-linked (GlcNAc...) asparagine glycosylation is present at Asn379. His416 is an active-site residue.

Belongs to the peptidase S10 family. Expressed in seedlings, roots, and siliques.

It is found in the secreted. In terms of biological role, probable carboxypeptidase. In Arabidopsis thaliana (Mouse-ear cress), this protein is Serine carboxypeptidase-like 5 (SCPL5).